The chain runs to 346 residues: uncharacterized protein (346 aa).

Belongs to the IIV-6 359L family.

This is an uncharacterized protein from Invertebrate iridescent virus 6 (IIV-6).